The following is a 199-amino-acid chain: Tegument protein UL14 homolog (199 aa).

Residues 176-191 (TDMNQMQPQPISKNEN) are compositionally biased toward polar residues. The tract at residues 176-199 (TDMNQMQPQPISKNENPPTPHTDV) is disordered.

This sequence belongs to the alphaherpesvirinae HHV-1 UL14 protein family.

The protein localises to the virion tegument. It localises to the host cytoplasm. The protein resides in the host nucleus. In terms of biological role, contributes to the nuclear transport of the viral transcriptional activator VP16 homolog during the early phase of infection. Therefore, participates indirectly in the regulation of the immediate-early gene expression. Additionally, seems to be important for efficient nuclear targeting of capsids. The sequence is that of Tegument protein UL14 homolog from Varicella-zoster virus (strain Dumas) (HHV-3).